Here is a 451-residue protein sequence, read N- to C-terminus: Chromosomal replication initiator protein DnaA (451 aa).

Positions 1-77 (MTENEQIFWN…EVYNAQISVD (77 aa)) are domain I, interacts with DnaA modulators. The domain II stretch occupies residues 77–110 (DYVFEEDLMIEQNQTKINQKPKQQALNSLPTVTS). Residues 111-329 (DLNSKYSFEN…GALKDISLVA (219 aa)) form a domain III, AAA+ region region. ATP-binding residues include Gly155, Gly157, Lys158, and Thr159. Residues 330 to 451 (NFKQIDTITV…EIETIKNKIK (122 aa)) form a domain IV, binds dsDNA region.

Belongs to the DnaA family. In terms of assembly, oligomerizes as a right-handed, spiral filament on DNA at oriC.

The protein resides in the cytoplasm. Its function is as follows. Plays an essential role in the initiation and regulation of chromosomal replication. ATP-DnaA binds to the origin of replication (oriC) to initiate formation of the DNA replication initiation complex once per cell cycle. Binds the DnaA box (a 9 base pair repeat at the origin) and separates the double-stranded (ds)DNA. Forms a right-handed helical filament on oriC DNA; dsDNA binds to the exterior of the filament while single-stranded (ss)DNA is stabiized in the filament's interior. The ATP-DnaA-oriC complex binds and stabilizes one strand of the AT-rich DNA unwinding element (DUE), permitting loading of DNA polymerase. After initiation quickly degrades to an ADP-DnaA complex that is not apt for DNA replication. Binds acidic phospholipids. Functionally, the half-life of ATP-DnaA is 12 minutes at 37 degrees Celsius, in E.coli the half-life is about 41 minutes. The protein is Chromosomal replication initiator protein DnaA of Streptococcus pyogenes serotype M1.